An 894-amino-acid chain; its full sequence is Protein SEY1 homolog (894 aa).

Low complexity-rich tracts occupy residues 1–10 (MSEEITTNQT) and 36–48 (VQEQ…QEQQ). The tract at residues 1–97 (MSEEITTNQT…QKQQTQEQEH (97 aa)) is disordered. Residues 1 to 800 (MSEEITTNQT…EQNRLTSGGG (800 aa)) are Cytoplasmic-facing. A coiled-coil region spans residues 21-60 (RLSNENIKQEDEEQQVQEQQEQQQQEQQEQIDDQDTQQQE). Over residues 49–65 (EQIDDQDTQQQEDEFVV) the composition is skewed to acidic residues. Residues 78 to 93 (TPTLQETPQQQKQQTQ) are compositionally biased toward low complexity. The region spanning 138–361 (GFDYSVISIL…ADSFIPKRKY (224 aa)) is the GB1/RHD3-type G domain. 148-155 (GPQSSGKS) is a GTP binding site. A helical membrane pass occupies residues 801–821 (VPGYMIILLCVLGFNEFISII). Topologically, residues 822-824 (SSP) are lumenal. Residues 825-845 (LLLLLTILLGGVGFVLFKLGL) form a helical membrane-spanning segment. Residues 846–894 (AGPFIDYSSQILVHFISKVKDIVLHVEQLQEQNHNNNNNNNNTPKQKRE) lie on the Cytoplasmic side of the membrane.

This sequence belongs to the TRAFAC class dynamin-like GTPase superfamily. GB1/RHD3 GTPase family. RHD3 subfamily.

The protein resides in the endoplasmic reticulum membrane. Its function is as follows. Probable GTP-binding protein that may be involved in cell development. This chain is Protein SEY1 homolog, found in Dictyostelium discoideum (Social amoeba).